Reading from the N-terminus, the 147-residue chain is MTLRLNDLKPADGARTERTRVGRGIGSGLGKTAGRGHKGSFARKGGGKIKAGFEGGQTPMQRRLPKIGFRSKMARDTAEVLSYQLDKLDAGDVDFAALRAANLVPSRAKKAKIVLKGELSKKFVLKGVAATAGAKAAIEAAGGSVEE.

Over residues methionine 1–arginine 20 the composition is skewed to basic and acidic residues. The segment at methionine 1 to glutamine 61 is disordered. The span at arginine 23 to alanine 33 shows a compositional bias: gly residues. Residues glycine 34–glycine 47 are compositionally biased toward basic residues.

This sequence belongs to the universal ribosomal protein uL15 family. As to quaternary structure, part of the 50S ribosomal subunit.

Its function is as follows. Binds to the 23S rRNA. The polypeptide is Large ribosomal subunit protein uL15 (Xanthomonas axonopodis pv. citri (strain 306)).